The chain runs to 1268 residues: Truncated polyprotein 1aTF (1268 aa).

A C4-type; atypical zinc finger spans residues 8 to 28; it reads CMCTPAARVFWNAGQVFCTRC. The Peptidase C31 domain occupies 69-180; the sequence is ECTPSGCCWL…QPFCPFEEAH (112 aa). The segment at 69–182 is PCP1-alpha; sequence ECTPSGCCWL…FCPFEEAHSD (114 aa). Residues C76 and H146 each act as for Nsp1-alpha papain-like cysteine proteinase activity in the active site. The interval 269–384 is PCP1-beta; that stretch reads PNVFDGKCWL…IFRFGAHKWY (116 aa). Residues 269-385 form the Peptidase C32 domain; sequence PNVFDGKCWL…FRFGAHKWYG (117 aa). Catalysis depends on for Nsp1-beta papain-like cysteine proteinase activity residues C276 and H345. The 108-residue stretch at 420-527 folds into the Peptidase C33 domain; that stretch reads TYSPPTDGSC…VGVCSEGCVA (108 aa). Residues C429 and H498 each act as for Nsp2 cysteine proteinase activity in the active site. Disordered stretches follow at residues 728-758 and 1027-1064; these read AIGS…SHPA and SVTP…SHAS. Basic and acidic residues predominate over residues 737-749; sequence DSKRENMHNSRED. The next 4 helical transmembrane spans lie at 1119 to 1139, 1153 to 1173, 1194 to 1214, and 1233 to 1253; these read LWLQ…CSVV, FLVL…LLLY, VMLS…AALW, and VISG…FLLF.

It localises to the host nucleus. The protein localises to the host cytoplasm. Its subcellular location is the host endoplasmic reticulum membrane. The protein resides in the membrane. In terms of biological role, is essential for viral subgenomic mRNA synthesis. Its function is as follows. Inhibits IFN-beta production. Counteracts the action of NF-kappaB by decreasing the phosphorylation of IkappaB-alpha, such that the degradation of IkappaB-alpha is suppressed. This leads to the blockage of NF-kappaB nuclear translocation and thus interference of NF-kappaB activation. Also seems to inhibit IRF3-dependent pathways. Functionally, nsp1-beta transactivates the programmed ribosomal frameshifting event leading to the expression of the 1aTF polyprotein. This Porcine reproductive and respiratory syndrome virus (isolate Pig/United States/SD 01-08/2001) (PRRSV) protein is Truncated polyprotein 1aTF.